Consider the following 339-residue polypeptide: D-erythrose-4-phosphate dehydrogenase (339 aa).

11-12 (RI) contacts NAD(+). Substrate-binding positions include 158 to 160 (SCT), arginine 204, 217 to 218 (TK), and arginine 240. The active-site Nucleophile is the cysteine 159. Residue asparagine 322 participates in NAD(+) binding.

It belongs to the glyceraldehyde-3-phosphate dehydrogenase family. Epd subfamily. Homotetramer.

The protein resides in the cytoplasm. The enzyme catalyses D-erythrose 4-phosphate + NAD(+) + H2O = 4-phospho-D-erythronate + NADH + 2 H(+). The protein operates within cofactor biosynthesis; pyridoxine 5'-phosphate biosynthesis; pyridoxine 5'-phosphate from D-erythrose 4-phosphate: step 1/5. Its function is as follows. Catalyzes the NAD-dependent conversion of D-erythrose 4-phosphate to 4-phosphoerythronate. The protein is D-erythrose-4-phosphate dehydrogenase of Aliivibrio salmonicida (strain LFI1238) (Vibrio salmonicida (strain LFI1238)).